The chain runs to 153 residues: Transthyretin (153 aa).

The first 24 residues, 1-24 (MAYYNTLALLTIFIFSGAFHRAQG), serve as a signal peptide directing secretion. C33 bears the Sulfocysteine mark. The L-thyroxine site is built by K38, E77, and S140.

Belongs to the transthyretin family. Homotetramer. Dimer of dimers. In the homotetramer, subunits assemble around a central channel that can accommodate two ligand molecules. Interacts with RBP4. Sulfonation of the reactive cysteine Cys-33 enhances the stability of the native conformation of TTR, avoiding misassembly of the protein leading to amyloid formation. In terms of tissue distribution, detected in plasma (at protein level). Expressed during metamorphosis in tadpole liver but not in tadpole brain, nor adult liver.

It is found in the secreted. In terms of biological role, thyroid hormone-binding protein, with a much higher binding affinity for triiodothyronine (T3) than for thyroxine (T4). Probably transports triiodothyronine from the bloodstream to the brain. This chain is Transthyretin, found in Aquarana catesbeiana (American bullfrog).